The sequence spans 393 residues: GDNF family receptor alpha-like (393 aa).

Residues 1–19 (MLVFIFLAVTLSSENESSS) form the signal peptide. Over 20–349 (QTNDCAHLIQ…LTGFNSFFNG (330 aa)) the chain is Extracellular. 4 N-linked (GlcNAc...) asparagine glycosylation sites follow: Asn59, Asn65, Asn101, and Asn115. 11 disulfides stabilise this stretch: Cys131–Cys189, Cys138–Cys144, Cys155–Cys167, Cys162–Cys210, Cys191–Cys198, Cys220–Cys291, Cys227–Cys233, Cys244–Cys275, Cys252–Cys258, Cys269–Cys316, and Cys293–Cys304. Positions 149-228 (ALYLKACSAN…TCLSVIHTCR (80 aa)) are required for interaction with GDF15. The helical transmembrane segment at 350–370 (ELLYVVVCMAVTCGILFLVML) threads the bilayer. Topologically, residues 371-393 (KLRIQSEKRDPSSIEIAGGVIIQ) are cytoplasmic.

It belongs to the GDNFR family. As to quaternary structure, interacts (via the extracellular domain) with GDF15 and RET; receptor of GDF15, mediates cellular signaling through interaction with RET after GDF15-binding. Interaction with RET requires previous GDF15-binding. In terms of processing, cleaved and inactivated by MMP14, inhibiting the GDF15-GFRAL aversive response. In terms of tissue distribution, expressed in the brainstem, restricted to cells in the area postrema and the immediately adjacent region of the nucleus tractus solitarius.

Its subcellular location is the cell membrane. Specifically inhibited by 3P10 monoclonal antibody. Strongly activated by LY3463251, a long-acting and stable agonist composed of GDF15 conjugated monomeric human IgG4 Fc. In terms of biological role, brainstem-restricted receptor for GDF15 hormone, which triggers an aversive response, characterized by nausea, vomiting, and/or loss of appetite in response to various stresses. The aversive response is both required to reduce continuing exposure to those stresses at the time of exposure and to promote avoidance behavior in the future. The GDF15-GFRAL aversive response is triggered by stresses, such as anticancer drugs (camptothecin or cisplatin), cancers or drugs such as metformin. Upon interaction with its ligand, GDF15, mediates the GDF15-induced autophosphorylation and activation of the RET tyrosine kinase receptor, leading to activation of MAPK- and AKT- signaling pathways. Ligand-binding activates GFRAL-expressing neurons localized in the area postrema and nucleus tractus solitarius of the brainstem. The GDF15-GFRAL signal induces expression of genes involved in metabolism, such as lipid metabolism in adipose tissues. This chain is GDNF family receptor alpha-like (Gfral), found in Mus musculus (Mouse).